The following is a 247-amino-acid chain: PF03932 family protein CutC (247 aa).

The protein belongs to the CutC family.

Its subcellular location is the cytoplasm. This is PF03932 family protein CutC from Chromobacterium violaceum (strain ATCC 12472 / DSM 30191 / JCM 1249 / CCUG 213 / NBRC 12614 / NCIMB 9131 / NCTC 9757 / MK).